A 368-amino-acid chain; its full sequence is Agmatine deiminase (368 aa).

Cys-357 serves as the catalytic Amidino-cysteine intermediate.

This sequence belongs to the agmatine deiminase family. In terms of assembly, homodimer.

It carries out the reaction agmatine + H2O = N-carbamoylputrescine + NH4(+). The protein operates within amine and polyamine biosynthesis; putrescine biosynthesis via agmatine pathway; N-carbamoylputrescine from agmatine: step 1/1. In terms of biological role, mediates the hydrolysis of agmatine into N-carbamoylputrescine in the arginine decarboxylase (ADC) pathway of putrescine biosynthesis, a basic polyamine. This chain is Agmatine deiminase, found in Pseudomonas savastanoi pv. phaseolicola (strain 1448A / Race 6) (Pseudomonas syringae pv. phaseolicola (strain 1448A / Race 6)).